Here is a 316-residue protein sequence, read N- to C-terminus: Pantothenate kinase (316 aa).

Residue 95-102 (GSVAVGKS) participates in ATP binding.

This sequence belongs to the prokaryotic pantothenate kinase family.

It localises to the cytoplasm. It carries out the reaction (R)-pantothenate + ATP = (R)-4'-phosphopantothenate + ADP + H(+). Its pathway is cofactor biosynthesis; coenzyme A biosynthesis; CoA from (R)-pantothenate: step 1/5. The protein is Pantothenate kinase of Shewanella piezotolerans (strain WP3 / JCM 13877).